The chain runs to 159 residues: MINYLKSFFLYEIVRGMALTLRYFFKAKVTINYPYEKSPVSPRFKGEHALRRYENGVERCIACKLCEAICPAQAIVIEAEALDDGSRRTTRYDIDMTKCIYCGLCQEACPVDAIVEGPNFEFASLTHTALIYDKERLLQNGDKWEQALTSKLYKDYEYR.

2 consecutive 4Fe-4S ferredoxin-type domains span residues arginine 51–glutamate 80 and threonine 90–asparagine 119. [4Fe-4S] cluster-binding residues include cysteine 60, cysteine 63, cysteine 66, cysteine 70, cysteine 99, cysteine 102, cysteine 105, and cysteine 109.

The protein belongs to the complex I 23 kDa subunit family. In terms of assembly, NDH-1 is composed of 14 different subunits. Subunits NuoA, H, J, K, L, M, N constitute the membrane sector of the complex. [4Fe-4S] cluster serves as cofactor.

The protein resides in the cell inner membrane. The catalysed reaction is a quinone + NADH + 5 H(+)(in) = a quinol + NAD(+) + 4 H(+)(out). Its function is as follows. NDH-1 shuttles electrons from NADH, via FMN and iron-sulfur (Fe-S) centers, to quinones in the respiratory chain. The immediate electron acceptor for the enzyme in this species is believed to be ubiquinone. Couples the redox reaction to proton translocation (for every two electrons transferred, four hydrogen ions are translocated across the cytoplasmic membrane), and thus conserves the redox energy in a proton gradient. The sequence is that of NADH-quinone oxidoreductase subunit I from Rickettsia canadensis (strain McKiel).